A 360-amino-acid chain; its full sequence is 3-isopropylmalate dehydrogenase (360 aa).

76–89 serves as a coordination point for NAD(+); sequence GPKWDTIERDIRPE. 4 residues coordinate substrate: Arg-96, Arg-106, Arg-134, and Asp-224. 3 residues coordinate Mg(2+): Asp-224, Asp-248, and Asp-252. 282–294 serves as a coordination point for NAD(+); sequence GSAPDIAGQGIAN.

This sequence belongs to the isocitrate and isopropylmalate dehydrogenases family. LeuB type 1 subfamily. In terms of assembly, homodimer. The cofactor is Mg(2+). Requires Mn(2+) as cofactor.

Its subcellular location is the cytoplasm. The catalysed reaction is (2R,3S)-3-isopropylmalate + NAD(+) = 4-methyl-2-oxopentanoate + CO2 + NADH. Its pathway is amino-acid biosynthesis; L-leucine biosynthesis; L-leucine from 3-methyl-2-oxobutanoate: step 3/4. Its function is as follows. Catalyzes the oxidation of 3-carboxy-2-hydroxy-4-methylpentanoate (3-isopropylmalate) to 3-carboxy-4-methyl-2-oxopentanoate. The product decarboxylates to 4-methyl-2 oxopentanoate. The polypeptide is 3-isopropylmalate dehydrogenase (Pseudomonas syringae pv. tomato (strain ATCC BAA-871 / DC3000)).